A 292-amino-acid polypeptide reads, in one-letter code: Diaminopimelate epimerase (292 aa).

Asparagine 13, glutamine 46, and asparagine 66 together coordinate substrate. Residue cysteine 75 is the Proton donor of the active site. Residues 76-77 (GN), asparagine 170, asparagine 203, and 221-222 (ER) each bind substrate. The active-site Proton acceptor is the cysteine 230. A substrate-binding site is contributed by 231–232 (GT).

The protein belongs to the diaminopimelate epimerase family. In terms of assembly, homodimer.

It localises to the cytoplasm. The enzyme catalyses (2S,6S)-2,6-diaminopimelate = meso-2,6-diaminopimelate. Its pathway is amino-acid biosynthesis; L-lysine biosynthesis via DAP pathway; DL-2,6-diaminopimelate from LL-2,6-diaminopimelate: step 1/1. Its function is as follows. Catalyzes the stereoinversion of LL-2,6-diaminopimelate (L,L-DAP) to meso-diaminopimelate (meso-DAP), a precursor of L-lysine and an essential component of the bacterial peptidoglycan. This is Diaminopimelate epimerase from Acidovorax ebreus (strain TPSY) (Diaphorobacter sp. (strain TPSY)).